A 561-amino-acid chain; its full sequence is Arginine--tRNA ligase (561 aa).

The 'HIGH' region signature appears at 129-139; sequence ANPTGPLHIGH.

Belongs to the class-I aminoacyl-tRNA synthetase family. Monomer.

Its subcellular location is the cytoplasm. It carries out the reaction tRNA(Arg) + L-arginine + ATP = L-arginyl-tRNA(Arg) + AMP + diphosphate. The chain is Arginine--tRNA ligase from Geotalea daltonii (strain DSM 22248 / JCM 15807 / FRC-32) (Geobacter daltonii).